A 376-amino-acid chain; its full sequence is 23S rRNA (uracil(747)-C(5))-methyltransferase RlmC (376 aa).

[4Fe-4S] cluster is bound by residues Cys3, Cys11, Cys14, and Cys87. S-adenosyl-L-methionine contacts are provided by Gln212, Phe241, Glu262, and Asn307. Residue Cys334 is the Nucleophile of the active site.

It belongs to the class I-like SAM-binding methyltransferase superfamily. RNA M5U methyltransferase family. RlmC subfamily.

The catalysed reaction is uridine(747) in 23S rRNA + S-adenosyl-L-methionine = 5-methyluridine(747) in 23S rRNA + S-adenosyl-L-homocysteine + H(+). Functionally, catalyzes the formation of 5-methyl-uridine at position 747 (m5U747) in 23S rRNA. This Yersinia pestis bv. Antiqua (strain Antiqua) protein is 23S rRNA (uracil(747)-C(5))-methyltransferase RlmC.